The primary structure comprises 223 residues: Serine/threonine/tyrosine-interacting protein (223 aa).

Residues 28 to 176 enclose the Tyrosine-protein phosphatase domain; the sequence is EMQEILPGLF…LQEYEAIYLA (149 aa). The Interaction with FBXW7 signature appears at 76-78; sequence FQQ. 3 positions are modified to phosphoserine: Ser184, Ser193, and Ser201. Positions 197-223 are disordered; that stretch reads GTTGSLKRTHEEEDDFGTMQVATAQNG.

This sequence belongs to the protein-tyrosine phosphatase family. Non-receptor class subfamily. As to quaternary structure, interacts with MAPK1; independently of MAPK1 phosphorylation status. Interacts with CARHSP1/Crhsp-24. Interacts (via FQQ motif) with FBXW7 (via F-box domain); the interaction is direct and prevents FBXW7 interaction with SKP1, a component of the SCF(FBXW7) complex.

Its subcellular location is the nucleus. It localises to the cytoplasm. It is found in the cytosol. Catalytically inactive phosphatase. Acts as a nuclear anchor for MAPK1/MAPK3 (ERK1/ERK2). Modulates cell-fate decisions and cell migration by spatiotemporal regulation of MAPK1/MAPK3 (ERK1/ERK2). By binding to the F-box of FBXW7, prevents the assembly of FBXW7 into the SCF E3 ubiquitin-protein ligase complex, and thereby inhibits degradation of its substrates. Plays a role in spermatogenesis. The sequence is that of Serine/threonine/tyrosine-interacting protein (STYX) from Pongo abelii (Sumatran orangutan).